The chain runs to 505 residues: RNA-splicing ligase RtcB homolog (505 aa).

Asp-119, Cys-122, His-227, and His-259 together coordinate Mn(2+). GMP is bound at residue 226–230 (NHYAE). Phosphoserine is present on Ser-300. A Mn(2+)-binding site is contributed by His-353. Residues 353-354 (HN), 402-405 (GGTM), Ser-409, and 428-431 (HGAG) contribute to the GMP site. Catalysis depends on His-428, which acts as the GMP-histidine intermediate. A Glycyl lysine isopeptide (Lys-Gly) (interchain with G-Cter in SUMO2) cross-link involves residue Lys-496. Lys-504 provides a ligand contact to GMP.

It belongs to the RtcB family. In terms of assembly, catalytic component of the tRNA-splicing ligase complex. Requires Mn(2+) as cofactor.

It localises to the nucleus. The protein resides in the cytoplasm. It catalyses the reaction a 3'-end 3'-phospho-ribonucleotide-RNA + a 5'-end dephospho-ribonucleoside-RNA + GTP = a ribonucleotidyl-ribonucleotide-RNA + GMP + diphosphate. It carries out the reaction a 3'-end 2',3'-cyclophospho-ribonucleotide-RNA + a 5'-end dephospho-ribonucleoside-RNA + GTP + H2O = a ribonucleotidyl-ribonucleotide-RNA + GMP + diphosphate + H(+). Catalytic subunit of the tRNA-splicing ligase complex that acts by directly joining spliced tRNA halves to mature-sized tRNAs by incorporating the precursor-derived splice junction phosphate into the mature tRNA as a canonical 3',5'-phosphodiester. May act as an RNA ligase with broad substrate specificity, and may function toward other RNAs. The sequence is that of RNA-splicing ligase RtcB homolog from Macaca fascicularis (Crab-eating macaque).